Consider the following 819-residue polypeptide: Disintegrin and metalloproteinase domain-containing protein 9 (819 aa).

The signal sequence occupies residues 1–28 (MGSGARFPSGTLRVRWLLLLGLVGPVLG). Over 29–697 (AARPGFQQTS…YNEMNTALRD (669 aa)) the chain is Extracellular. 4 N-linked (GlcNAc...) asparagine glycosylation sites follow: Asn125, Asn144, Asn154, and Asn231. The region spanning 212–406 (RYVELFIVVD…KGGNCLLNIP (195 aa)) is the Peptidase M12B domain. 7 disulfide bridges follow: Cys322/Cys401, Cys363/Cys385, Cys365/Cys370, Cys473/Cys493, Cys644/Cys656, Cys650/Cys662, and Cys664/Cys673. His347 serves as a coordination point for Zn(2+). Residue Glu348 is part of the active site. Residues His351 and His357 each coordinate Zn(2+). N-linked (GlcNAc...) asparagine glycans are attached at residues Asn381 and Asn487. The region spanning 414–501 (APSCGNKLVD…FCQPDVFIQN (88 aa)) is the Disintegrin domain. In terms of domain architecture, EGF-like spans 644-698 (CDVQKKCHGHGVCNSNKNCHCENGWAPPNCETKGYGGSVDSGPTYNEMNTALRDG). The helical transmembrane segment at 698–718 (GLLVFFFLIVPLIVCAIFIFI) threads the bilayer. At 719-819 (KRDQLWRSYF…PAPPLYSSLT (101 aa)) the chain is on the cytoplasmic side. 2 disordered regions span residues 734 to 763 (QTYESDGKNQANPSRQPGSVPRHVSPVTPP) and 780 to 819 (AKQPQQFPSRPPPPQPKVSSQGNLIPARPAPAPPLYSSLT). Over residues 735–750 (TYESDGKNQANPSRQP) the composition is skewed to polar residues. The residue at position 758 (Ser758) is a Phosphoserine. At Thr761 the chain carries Phosphothreonine.

In terms of assembly, interacts with SH3GL2 and SNX9 through its cytoplasmic tail. Interacts with ITGA6. Zn(2+) is required as a cofactor. Proteolytically cleaved in the trans-Golgi network before it reaches the plasma membrane to generate a mature protein. The removal of the pro-domain occurs via cleavage at two different sites. Processed most likely by a pro-protein convertase such as furin, at the boundary between the pro-domain and the catalytic domain. An additional upstream cleavage pro-protein convertase site (Arg-56/Glu-57) has an important role in the activation of ADAM9. Post-translationally, phosphorylation is induced in vitro by phorbol-12-myristate-13-acetate (PMA). In terms of tissue distribution, widely expressed. Expressed in chondrocytes. Isoform 2 is highly expressed in liver and heart.

It is found in the cell membrane. Its subcellular location is the secreted. Its activity is regulated as follows. Synthesized as an inactive form which is proteolytically cleaved to generate an active enzyme. Processing at the upstream site is particularly important for activation of the proenzyme, whereas processing at the boundary between the pro-domain and the catalytic domain does not appear to be essential. Inhibited by hydroxamic acid-based inhibitors. Functionally, metalloprotease that cleaves and releases a number of molecules with important roles in tumorigenesis and angiogenesis, such as TEK, KDR, EPHB4, CD40, VCAM1 and CDH5. May mediate cell-cell, cell-matrix interactions and regulate the motility of cells via interactions with integrins. Its function is as follows. May act as alpha-secretase for amyloid precursor protein (APP). The sequence is that of Disintegrin and metalloproteinase domain-containing protein 9 (ADAM9) from Homo sapiens (Human).